A 249-amino-acid polypeptide reads, in one-letter code: 2,3-bisphosphoglycerate-dependent phosphoglycerate mutase (249 aa).

Residues 8–15, 21–22, Arg60, 87–90, Lys98, 114–115, and 183–184 each bind substrate; these read RHGESTWN, TG, ERHY, RR, and GN. The Tele-phosphohistidine intermediate role is filled by His9. Glu87 functions as the Proton donor/acceptor in the catalytic mechanism.

It belongs to the phosphoglycerate mutase family. BPG-dependent PGAM subfamily. Homodimer.

The catalysed reaction is (2R)-2-phosphoglycerate = (2R)-3-phosphoglycerate. It participates in carbohydrate degradation; glycolysis; pyruvate from D-glyceraldehyde 3-phosphate: step 3/5. Its function is as follows. Catalyzes the interconversion of 2-phosphoglycerate and 3-phosphoglycerate. This Burkholderia mallei (strain NCTC 10247) protein is 2,3-bisphosphoglycerate-dependent phosphoglycerate mutase.